We begin with the raw amino-acid sequence, 547 residues long: Glucose-6-phosphate isomerase (547 aa).

E356 acts as the Proton donor in catalysis. Active-site residues include H387 and K508.

The protein belongs to the GPI family.

It is found in the cytoplasm. The catalysed reaction is alpha-D-glucose 6-phosphate = beta-D-fructose 6-phosphate. It functions in the pathway carbohydrate biosynthesis; gluconeogenesis. Its pathway is carbohydrate degradation; glycolysis; D-glyceraldehyde 3-phosphate and glycerone phosphate from D-glucose: step 2/4. In terms of biological role, catalyzes the reversible isomerization of glucose-6-phosphate to fructose-6-phosphate. The chain is Glucose-6-phosphate isomerase from Cupriavidus taiwanensis (strain DSM 17343 / BCRC 17206 / CCUG 44338 / CIP 107171 / LMG 19424 / R1) (Ralstonia taiwanensis (strain LMG 19424)).